Consider the following 172-residue polypeptide: Cytidylate kinase (172 aa).

Residue 8–16 (GPPGSGKST) coordinates ATP.

It belongs to the cytidylate kinase family. Type 2 subfamily.

It localises to the cytoplasm. The catalysed reaction is CMP + ATP = CDP + ADP. It catalyses the reaction dCMP + ATP = dCDP + ADP. The polypeptide is Cytidylate kinase (Ignicoccus hospitalis (strain KIN4/I / DSM 18386 / JCM 14125)).